Reading from the N-terminus, the 249-residue chain is tRNA (guanine-N(1)-)-methyltransferase (249 aa).

Residues G113 and 133-138 (IGDFVV) contribute to the S-adenosyl-L-methionine site.

It belongs to the RNA methyltransferase TrmD family. As to quaternary structure, homodimer.

It is found in the cytoplasm. It catalyses the reaction guanosine(37) in tRNA + S-adenosyl-L-methionine = N(1)-methylguanosine(37) in tRNA + S-adenosyl-L-homocysteine + H(+). Specifically methylates guanosine-37 in various tRNAs. This Neisseria meningitidis serogroup C / serotype 2a (strain ATCC 700532 / DSM 15464 / FAM18) protein is tRNA (guanine-N(1)-)-methyltransferase.